The chain runs to 237 residues: Apoptosis regulator OPG045 (237 aa).

This sequence belongs to the orthopoxvirus OPG045 family. As to quaternary structure, interacts with host BAK1, BAX and BID.

The protein localises to the host mitochondrion outer membrane. It is found in the host cytoplasm. Its function is as follows. Plays a role in the inhibition of host apoptosis. Interacts with host BAX and thereby inhibits its activity. The protein is Apoptosis regulator OPG045 (OPG045) of Homo sapiens (Human).